Here is a 279-residue protein sequence, read N- to C-terminus: S-methyl-5'-thioadenosine phosphorylase (279 aa).

Residues S13, 55–56 (RH), and 88–89 (TA) each bind phosphate. M191 is a binding site for substrate. Residue T192 participates in phosphate binding. Position 215–217 (215–217 (DYD)) interacts with substrate.

Belongs to the PNP/MTAP phosphorylase family. MTAP subfamily. As to quaternary structure, homotrimer.

The protein resides in the cytoplasm. The protein localises to the nucleus. The enzyme catalyses S-methyl-5'-thioadenosine + phosphate = 5-(methylsulfanyl)-alpha-D-ribose 1-phosphate + adenine. Its pathway is amino-acid biosynthesis; L-methionine biosynthesis via salvage pathway; S-methyl-5-thio-alpha-D-ribose 1-phosphate from S-methyl-5'-thioadenosine (phosphorylase route): step 1/1. Catalyzes the reversible phosphorylation of S-methyl-5'-thioadenosine (MTA) to adenine and 5-methylthioribose-1-phosphate. Involved in the breakdown of MTA, a major by-product of polyamine biosynthesis. Responsible for the first step in the methionine salvage pathway after MTA has been generated from S-adenosylmethionine. Has broad substrate specificity with 6-aminopurine nucleosides as preferred substrates. The chain is S-methyl-5'-thioadenosine phosphorylase from Anopheles darlingi (Mosquito).